We begin with the raw amino-acid sequence, 859 residues long: Outer membrane usher protein AfaC (859 aa).

Positions 1 to 28 are cleaved as a signal peptide; sequence MRDTSSGRMRTGVTGLALAVMVACVMFR.

It belongs to the fimbrial export usher family.

The protein resides in the cell outer membrane. In terms of biological role, involved in the export and assembly of AFA-III afimbrial adhesin subunits across the outer membrane. The sequence is that of Outer membrane usher protein AfaC (afaC) from Escherichia coli.